A 560-amino-acid chain; its full sequence is Serine palmitoyltransferase 2 (560 aa).

Residues 65 to 85 traverse the membrane as a helical segment; the sequence is PMLVAVLTYVGYGVLTLFGYL. Position 377 is an N6-(pyridoxal phosphate)lysine (Lys-377).

This sequence belongs to the class-II pyridoxal-phosphate-dependent aminotransferase family. In terms of assembly, component of the serine palmitoyltransferase (SPT) complex, which is composed of SPTLC1, SPTLC2 or SPTLC3 and SPTSSA or SPTSSB. The heterodimer consisting of SPTLC1 and SPTLC2/SPTLC3 forms the catalytic core of the enzyme, while SPTSSA or SPTSSB subunits determine substrate specificity. SPT also interacts with ORMDL proteins, especially ORMDL3, which negatively regulate SPT activity in the presence of ceramides. Forms dimers of heterodimers with SPTLC1. Requires pyridoxal 5'-phosphate as cofactor.

The protein resides in the endoplasmic reticulum membrane. The catalysed reaction is L-serine + hexadecanoyl-CoA + H(+) = 3-oxosphinganine + CO2 + CoA. It catalyses the reaction octadecanoyl-CoA + L-serine + H(+) = 3-oxoeicosasphinganine + CO2 + CoA. It participates in lipid metabolism; sphingolipid metabolism. With respect to regulation, SPT complex catalytic activity is negatively regulated by ORMDL proteins, including ORMDL3, in the presence of ceramides. This mechanism allows to maintain ceramide levels at sufficient concentrations for the production of complex sphingolipids, but which prevents the accumulation of ceramides to levels that trigger apoptosis. In terms of biological role, component of the serine palmitoyltransferase multisubunit enzyme (SPT) that catalyzes the initial and rate-limiting step in sphingolipid biosynthesis by condensing L-serine and activated acyl-CoA (most commonly palmitoyl-CoA) to form long-chain bases. The SPT complex is composed of SPTLC1, SPTLC2 or SPTLC3 and SPTSSA or SPTSSB. Within this complex, the heterodimer consisting of SPTLC1 and SPTLC2/SPTLC3 forms the catalytic core. The composition of the serine palmitoyltransferase (SPT) complex determines the substrate preference. The SPTLC1-SPTLC2-SPTSSA complex shows a strong preference for C16-CoA substrate, while the SPTLC1-SPTLC3-SPTSSA isozyme uses both C14-CoA and C16-CoA as substrates, with a slight preference for C14-CoA. The SPTLC1-SPTLC2-SPTSSB complex shows a strong preference for C18-CoA substrate, while the SPTLC1-SPTLC3-SPTSSB isozyme displays an ability to use a broader range of acyl-CoAs, without apparent preference. Crucial for adipogenesis. The polypeptide is Serine palmitoyltransferase 2 (SPTLC2) (Cricetulus griseus (Chinese hamster)).